The sequence spans 417 residues: Monooxygenase cfoF (417 aa).

Residues 45–48, R126, and D327 each bind FAD; that span reads DRDK. The segment covering 389-399 has biased composition (basic and acidic residues); it reads AHTTQLDRDQF. The tract at residues 389–417 is disordered; it reads AHTTQLDRDQFTDGSGANDFLVGQQHSDK.

This sequence belongs to the aromatic-ring hydroxylase family. KMO subfamily. Requires FAD as cofactor.

The protein operates within secondary metabolite biosynthesis; flavonoid biosynthesis. Its function is as follows. Monooxygenase; part of the gene cluster that mediates the biosynthesis of chlorflavonin, a fungal flavonoid with acetolactate synthase inhibitory activity. Within the pathway, cfoF is responsible for the hydroxylation of the flavonoid skeleton at position C3. The pathway begins with the PKS-NRPS hybrid synthetase cfoA that uses benzoic acid or p-hydroxybenzoic acid as a starter unit with four rounds of chain elongation using malonyl-CoA to form the chalcone skeleton. Then, a new type of chalcone isomerase, cfoK, catalyzes the conversion of the chalcone into a flavanone by a histidine-mediated oxa-Michael addition mechanism. The desaturation of flavanone to flavone is catalyzed by a new type of flavone synthase, the flavin mononucleotide (FMN)-dependent oxidoreductase cfoJ. Monooxygenases cfoF, cfoG, and P450 cfoH are responsible for the hydroxylation of the flavonoid skeleton at sites C3, C8, and C2', respectively. Like cfoF, the dehydratase cfoI plays also a role in the hydroxylation of position C3. Methyltransferases cfoB, cfoC, and cfoD then catalyze the methylation of C7-OH, C8-OH, and C3-OH, respectively. Finally, the monooxygenase cfoE is responsible for the chlorination of flavonoid at position C3'. This chain is Monooxygenase cfoF, found in Aspergillus candidus.